The sequence spans 492 residues: Metal cation symporter ZIP14 (492 aa).

Positions M1–A30 are cleaved as a signal peptide. At S31–G157 the chain is on the extracellular side. 3 N-linked (GlcNAc...) asparagine glycosylation sites follow: N77, N87, and N102. Residues L158 to M178 traverse the membrane as a helical segment. At K179–L186 the chain is on the cytoplasmic side. The chain crosses the membrane as a helical span at residues L187–I207. Topologically, residues P208–S224 are extracellular. Residues A225–L245 form a helical membrane-spanning segment. Residues K246 to Q397 are Cytoplasmic-facing. The short motif at H251–Y258 is the HHHGHXHX-motif element. An XEXPHE-motif motif is present at residues E376–E381. Residues A398–L418 form a helical membrane-spanning segment. Topologically, residues A419 to S424 are extracellular. A helical transmembrane segment spans residues A425–F445. The Cytoplasmic portion of the chain corresponds to P446–S460. Residues I461–V481 traverse the membrane as a helical segment. Over L482–G492 the chain is Extracellular.

It belongs to the ZIP transporter (TC 2.A.5) family. Homotrimer. In terms of processing, ubiquitinated. Ubiquitination occurs upon iron depletion. The ubiquitinated form undergoes proteasomal degradation. N-glycosylated. N-glycosylation at Asn-102 is required for iron-regulated extraction of the transporter from membranes and subsequent proteasomal degradation. Ubiquitously expressed, with higher expression in liver, pancreas, fetal liver, thyroid gland, left and right ventricle, right atrium and fetal heart. Weakly expressed in spleen, thymus, and peripheral blood leukocytes. Expressed in liver and in brain by large neurons in the globus pallidus, the insular cortex and the dentate nucleus and to a lower extent in the putamen and the caudate nucleus (at protein level). Expressed in osteoblasts and giant osteoclast-like cells, but not in osteocytes found osteoblastoma and giant cell tumors (at protein level). Expressed by microvascular capillary endothelial cells that constitute the blood-brain barrier (at protein level). Expressed by macrophages. As to expression, widely expressed but not detected in brain, heart, skeletal muscle, placenta and fetal skin.

The protein resides in the cell membrane. It localises to the apical cell membrane. It is found in the basolateral cell membrane. Its subcellular location is the early endosome membrane. The protein localises to the late endosome membrane. The protein resides in the lysosome membrane. The enzyme catalyses Zn(2+)(out) + 2 hydrogencarbonate(out) = Zn(2+)(in) + 2 hydrogencarbonate(in). The catalysed reaction is Mn(2+)(out) + 2 hydrogencarbonate(out) = Mn(2+)(in) + 2 hydrogencarbonate(in). It carries out the reaction Fe(2+)(out) + 2 hydrogencarbonate(out) = Fe(2+)(in) + 2 hydrogencarbonate(in). It catalyses the reaction Cd(2+)(out) + 2 hydrogencarbonate(out) = Cd(2+)(in) + 2 hydrogencarbonate(in). Its function is as follows. Electroneutral transporter of the plasma membrane mediating the cellular uptake of the divalent metal cations zinc, manganese and iron that are important for tissue homeostasis, metabolism, development and immunity. Functions as an energy-dependent symporter, transporting through the membranes an electroneutral complex composed of a divalent metal cation and two bicarbonate anions. Beside these endogenous cellular substrates, can also import cadmium a non-essential metal which is cytotoxic and carcinogenic. Controls the cellular uptake by the intestinal epithelium of systemic zinc, which is in turn required to maintain tight junctions and the intestinal permeability. Modifies the activity of zinc-dependent phosphodiesterases, thereby indirectly regulating G protein-coupled receptor signaling pathways important for gluconeogenesis and chondrocyte differentiation. Regulates insulin receptor signaling, glucose uptake, glycogen synthesis and gluconeogenesis in hepatocytes through the zinc-dependent intracellular catabolism of insulin. Through zinc cellular uptake also plays a role in the adaptation of cells to endoplasmic reticulum stress. Major manganese transporter of the basolateral membrane of intestinal epithelial cells, it plays a central role in manganese systemic homeostasis through intestinal manganese uptake. Also involved in manganese extracellular uptake by cells of the blood-brain barrier. May also play a role in manganese and zinc homeostasis participating in their elimination from the blood through the hepatobiliary excretion. Also functions in the extracellular uptake of free iron. May also function intracellularly and mediate the transport from endosomes to cytosol of iron endocytosed by transferrin. Plays a role in innate immunity by regulating the expression of cytokines by activated macrophages. The sequence is that of Metal cation symporter ZIP14 from Homo sapiens (Human).